We begin with the raw amino-acid sequence, 358 residues long: Nicotinate-nucleotide--dimethylbenzimidazole phosphoribosyltransferase (358 aa).

E314 serves as the catalytic Proton acceptor.

It belongs to the CobT family.

The catalysed reaction is 5,6-dimethylbenzimidazole + nicotinate beta-D-ribonucleotide = alpha-ribazole 5'-phosphate + nicotinate + H(+). Its pathway is nucleoside biosynthesis; alpha-ribazole biosynthesis; alpha-ribazole from 5,6-dimethylbenzimidazole: step 1/2. Its function is as follows. Catalyzes the synthesis of alpha-ribazole-5'-phosphate from nicotinate mononucleotide (NAMN) and 5,6-dimethylbenzimidazole (DMB). The sequence is that of Nicotinate-nucleotide--dimethylbenzimidazole phosphoribosyltransferase from Mycobacterium ulcerans (strain Agy99).